The sequence spans 205 residues: Ribosomal RNA small subunit methyltransferase G (205 aa).

S-adenosyl-L-methionine is bound by residues G70, L75, 124 to 125, and R138; that span reads IE.

This sequence belongs to the methyltransferase superfamily. RNA methyltransferase RsmG family.

The protein localises to the cytoplasm. It carries out the reaction guanosine(527) in 16S rRNA + S-adenosyl-L-methionine = N(7)-methylguanosine(527) in 16S rRNA + S-adenosyl-L-homocysteine. Functionally, specifically methylates the N7 position of guanine in position 527 of 16S rRNA. This chain is Ribosomal RNA small subunit methyltransferase G, found in Ruegeria sp. (strain TM1040) (Silicibacter sp.).